Consider the following 218-residue polypeptide: Elongation factor Ts (218 aa).

Residues 82 to 85 (TDFV) are involved in Mg(2+) ion dislocation from EF-Tu.

Belongs to the EF-Ts family.

It is found in the cytoplasm. In terms of biological role, associates with the EF-Tu.GDP complex and induces the exchange of GDP to GTP. It remains bound to the aminoacyl-tRNA.EF-Tu.GTP complex up to the GTP hydrolysis stage on the ribosome. This is Elongation factor Ts (tsf) from Synechocystis sp. (strain ATCC 27184 / PCC 6803 / Kazusa).